Here is a 356-residue protein sequence, read N- to C-terminus: MADAATIAKLEEGFKKLEAATDCKSLLKKYLSKDIFDSLKAKKTSLGATLLDVIQSGVENLDSGVGIYAPDAEAYSLFAPLFDPIIEDYHKGFKQTDKHPAKDFGDVSKFINVDPEGTFVISTRVRCGRSMEGYPFNPCLTEAQYKEMEEKVSSTLSGLEGELKGSYFPLTGMTKEVQQKLIDDHFLFKEGDRFLQAANACRYWPAGRGIYHNDNKTFLVWCNEEDHLRIISMQMGGDLGQVYRRLVSAVNDIEKRVPFSHHDRLGFLTFCPTNLGTTVRASVHIKLPKLAANREKLEEVAAKFSLQVRGTRGEHTEAEGGIYDISNKRRMGLTEFQAVKEMQDGILELIKIEKEM.

An N-acetylalanine modification is found at Ala-2. The region spanning Lys-9 to Lys-91 is the Phosphagen kinase N-terminal domain. Residue Gly-64 to Tyr-68 coordinates L-arginine. The Phosphagen kinase C-terminal domain maps to Phe-119–Met-356. Residues Ser-122 to Arg-126 and His-185 each bind ATP. Glu-225 contacts L-arginine. Arg-229 serves as a coordination point for ATP. Cys-271 provides a ligand contact to L-arginine. ATP is bound by residues Arg-280–His-284 and Arg-309–Glu-314. Residue Glu-314 participates in L-arginine binding.

This sequence belongs to the ATP:guanido phosphotransferase family.

It carries out the reaction L-arginine + ATP = N(omega)-phospho-L-arginine + ADP + H(+). This is Arginine kinase from Homarus gammarus (European lobster).